We begin with the raw amino-acid sequence, 654 residues long: DNA ligase (654 aa).

Residues 37–41 (DEEYD), 86–87 (SM), and Glu-113 each bind NAD(+). Catalysis depends on Lys-115, which acts as the N6-AMP-lysine intermediate. Residues Arg-136, Glu-170, and Lys-308 each coordinate NAD(+). Residues Cys-402, Cys-405, Cys-418, and Cys-423 each contribute to the Zn(2+) site. Positions 576 to 654 (ITQNAFSGKS…GEFERLKLEI (79 aa)) constitute a BRCT domain.

It belongs to the NAD-dependent DNA ligase family. LigA subfamily. It depends on Mg(2+) as a cofactor. Requires Mn(2+) as cofactor.

It catalyses the reaction NAD(+) + (deoxyribonucleotide)n-3'-hydroxyl + 5'-phospho-(deoxyribonucleotide)m = (deoxyribonucleotide)n+m + AMP + beta-nicotinamide D-nucleotide.. Its function is as follows. DNA ligase that catalyzes the formation of phosphodiester linkages between 5'-phosphoryl and 3'-hydroxyl groups in double-stranded DNA using NAD as a coenzyme and as the energy source for the reaction. It is essential for DNA replication and repair of damaged DNA. In Campylobacter curvus (strain 525.92), this protein is DNA ligase.